Here is a 102-residue protein sequence, read N- to C-terminus: Large ribosomal subunit protein uL24 (102 aa).

This sequence belongs to the universal ribosomal protein uL24 family. As to quaternary structure, part of the 50S ribosomal subunit.

Functionally, one of two assembly initiator proteins, it binds directly to the 5'-end of the 23S rRNA, where it nucleates assembly of the 50S subunit. In terms of biological role, one of the proteins that surrounds the polypeptide exit tunnel on the outside of the subunit. The protein is Large ribosomal subunit protein uL24 of Cupriavidus metallidurans (strain ATCC 43123 / DSM 2839 / NBRC 102507 / CH34) (Ralstonia metallidurans).